The chain runs to 270 residues: Glutamate racemase (270 aa).

Residues 14 to 15 (DS) and 46 to 47 (YG) contribute to the substrate site. C77 acts as the Proton donor/acceptor in catalysis. 78-79 (NT) is a binding site for substrate. The active-site Proton donor/acceptor is C189. Substrate is bound at residue 190–191 (TH).

It belongs to the aspartate/glutamate racemases family.

It carries out the reaction L-glutamate = D-glutamate. It participates in cell wall biogenesis; peptidoglycan biosynthesis. Provides the (R)-glutamate required for cell wall biosynthesis. This chain is Glutamate racemase, found in Neisseria meningitidis serogroup A / serotype 4A (strain DSM 15465 / Z2491).